The primary structure comprises 196 residues: Adenylate kinase (196 aa).

Residue 9-17 participates in ATP binding; sequence GIPGVGKST.

It belongs to the archaeal adenylate kinase family.

It is found in the cytoplasm. It carries out the reaction AMP + ATP = 2 ADP. This Pyrococcus furiosus (strain ATCC 43587 / DSM 3638 / JCM 8422 / Vc1) protein is Adenylate kinase.